Consider the following 67-residue polypeptide: Large ribosomal subunit protein bL35 (67 aa).

It belongs to the bacterial ribosomal protein bL35 family.

This is Large ribosomal subunit protein bL35 from Picosynechococcus sp. (strain ATCC 27264 / PCC 7002 / PR-6) (Agmenellum quadruplicatum).